Consider the following 277-residue polypeptide: tRNA U34 carboxymethyltransferase (277 aa).

Residues lysine 46, tryptophan 60, lysine 65, glycine 84, 106-108 (DPS), 133-134 (VE), tyrosine 153, and arginine 268 each bind carboxy-S-adenosyl-L-methionine.

It belongs to the class I-like SAM-binding methyltransferase superfamily. CmoB family. Homotetramer.

It carries out the reaction carboxy-S-adenosyl-L-methionine + 5-hydroxyuridine(34) in tRNA = 5-carboxymethoxyuridine(34) in tRNA + S-adenosyl-L-homocysteine + H(+). Functionally, catalyzes carboxymethyl transfer from carboxy-S-adenosyl-L-methionine (Cx-SAM) to 5-hydroxyuridine (ho5U) to form 5-carboxymethoxyuridine (cmo5U) at position 34 in tRNAs. In Wolinella succinogenes (strain ATCC 29543 / DSM 1740 / CCUG 13145 / JCM 31913 / LMG 7466 / NCTC 11488 / FDC 602W) (Vibrio succinogenes), this protein is tRNA U34 carboxymethyltransferase.